The chain runs to 259 residues: uncharacterized protein (259 aa).

This sequence belongs to the BtpA family.

This is an uncharacterized protein from Pyrococcus horikoshii (strain ATCC 700860 / DSM 12428 / JCM 9974 / NBRC 100139 / OT-3).